The primary structure comprises 1146 residues: Activator of SKN7 protein 10 (1146 aa).

Positions 1–15 are enriched in polar residues; that stretch reads MSDYFSSRPSQTLTP. 2 disordered regions span residues 1–32 and 171–194; these read MSDYFSSRPSQTLTPMGNKPSGGGGGDDASSI and ITDPFTTAPRGPKKAQPAQKKVGL. Serine 344 carries the phosphoserine modification. Residues 482–606 enclose the PH domain; it reads CIKAGYFLKK…DCTLKDASST (125 aa). Residues 553–575 form a disordered region; sequence NNHHRQASDVHNSSTTTGGTAGA. Residues 564–575 are compositionally biased toward low complexity; that stretch reads NSSTTTGGTAGA. Serine 793 carries the phosphoserine modification. A Phosphothreonine modification is found at threonine 808. Disordered regions lie at residues 835 to 854 and 909 to 982; these read MATSGNTTPSYSSGSRPQSM and PVNS…TAMR. Over residues 912–924 the composition is skewed to low complexity; sequence SPGSSNSESSSGG. The segment covering 939–950 has biased composition (polar residues); it reads YTQRNSEGSSPC. The residue at position 944 (serine 944) is a Phosphoserine. Over residues 958–968 the composition is skewed to low complexity; sequence QQQQPLQMQPL. Serine 969 is subject to Phosphoserine. The segment covering 969–982 has biased composition (polar residues); that stretch reads SRTSSSSVNVTAMR. Position 1017 is a phosphothreonine (threonine 1017). Serine 1070, serine 1095, and serine 1098 each carry phosphoserine. The tract at residues 1124–1146 is disordered; sequence GIQEDDGDSTNNDTIKLNQSIYS. Residues 1132–1146 show a composition bias toward polar residues; it reads STNNDTIKLNQSIYS.

The protein belongs to the RGC1 family. As to quaternary structure, component of the RNA polymerase II holoenzyme. Interacts with RPO21 and SSN8. Phosphorylated in response to various stresses. stress-induced phosphorylation is partially dependent on HOG1.

It localises to the cytoplasm. In terms of biological role, positive regulator of FPS1 glycerol channel required for the glycerol efflux. As a component of the RNA polymerase II holoenzyme, is required for SSN8 destruction in response to oxidative stress but not heat shock. Required for cell survival in response to heat shock independent of SSN8. This is Activator of SKN7 protein 10 (ASK10) from Saccharomyces cerevisiae (strain ATCC 204508 / S288c) (Baker's yeast).